The following is a 942-amino-acid chain: Glutamyl aminopeptidase (942 aa).

The Cytoplasmic portion of the chain corresponds to Met1–His14. The helical; Signal-anchor for type II membrane protein transmembrane segment at Val15–Leu35 threads the bilayer. At Thr36–Asn942 the chain is on the extracellular side. The segment at Asp40 to Glu74 is disordered. N-linked (GlcNAc...) asparagine glycans are attached at residues Asn110, Asn114, and Asn187. Position 213 (Glu213) interacts with substrate. Asn314 is a glycosylation site (N-linked (GlcNAc...) asparagine). Residue Gly347–Asn351 participates in substrate binding. N-linked (GlcNAc...) asparagine glycosylation occurs at Asn367. His383 contributes to the Zn(2+) binding site. The active-site Proton acceptor is Glu384. 2 residues coordinate Zn(2+): His387 and Glu406. N-linked (GlcNAc...) asparagine glycosylation is found at Asn557, Asn579, Asn587, Asn597, Asn632, Asn668, Asn753, Asn786, and Asn791. Residue Arg877 coordinates substrate.

It belongs to the peptidase M1 family. Homodimer; disulfide-linked. Zn(2+) is required as a cofactor.

Its subcellular location is the cell membrane. It carries out the reaction Release of N-terminal glutamate (and to a lesser extent aspartate) from a peptide.. With respect to regulation, substrate specificity is modulated by calcium which enhances the enzymatic activity for cleavage of acidic residues while reducing its activity with basic residues. Inhibited by aminopeptidase inhibitors amastatin and bestatin. Functionally, regulates central hypertension through its calcium-modulated preference to cleave N-terminal acidic residues from peptides such as angiotensin II. The polypeptide is Glutamyl aminopeptidase (ENPEP) (Sus scrofa (Pig)).